Here is a 464-residue protein sequence, read N- to C-terminus: Phospho-2-dehydro-3-deoxyheptonate aldolase AroG (464 aa).

Mn(2+) is bound at residue Cys-87. Phosphoenolpyruvate is bound by residues Arg-126, 285–286, Lys-308, and Arg-339; that span reads ER. His-371, Glu-413, and Asp-443 together coordinate Mn(2+).

It belongs to the class-II DAHP synthase family. As to quaternary structure, homodimer. Probably interacts with MSMEG_5536. Mn(2+) serves as cofactor. Requires Co(2+) as cofactor. Cd(2+) is required as a cofactor.

The catalysed reaction is D-erythrose 4-phosphate + phosphoenolpyruvate + H2O = 7-phospho-2-dehydro-3-deoxy-D-arabino-heptonate + phosphate. Its pathway is metabolic intermediate biosynthesis; chorismate biosynthesis; chorismate from D-erythrose 4-phosphate and phosphoenolpyruvate: step 1/7. Its function is as follows. Catalyzes an aldol-like condensation reaction between phosphoenolpyruvate (PEP) and D-erythrose 4-phosphate (E4P) to generate 3-deoxy-D-arabino-heptulosonate 7-phosphate (DAH7P) and inorganic phosphate. In Mycolicibacterium smegmatis (strain ATCC 700084 / mc(2)155) (Mycobacterium smegmatis), this protein is Phospho-2-dehydro-3-deoxyheptonate aldolase AroG (aroG).